Here is a 334-residue protein sequence, read N- to C-terminus: Protein-methionine-sulfoxide reductase catalytic subunit MsrP (334 aa).

Residues 1–44 constitute a signal peptide (tat-type signal); sequence MKKIRPLTEADVTAESAFFMQRRQVLKALGISAAALSLPSTAQA. Mo-molybdopterin-binding positions include N88, 91 to 92, C146, T181, N233, R238, and 249 to 251; these read YE and GIK.

The protein belongs to the MsrP family. Heterodimer of a catalytic subunit (MsrP) and a heme-binding subunit (MsrQ). Requires Mo-molybdopterin as cofactor. In terms of processing, predicted to be exported by the Tat system. The position of the signal peptide cleavage has not been experimentally proven.

The protein localises to the periplasm. It carries out the reaction L-methionyl-[protein] + a quinone + H2O = L-methionyl-(S)-S-oxide-[protein] + a quinol. The catalysed reaction is L-methionyl-[protein] + a quinone + H2O = L-methionyl-(R)-S-oxide-[protein] + a quinol. In terms of biological role, part of the MsrPQ system that repairs oxidized periplasmic proteins containing methionine sulfoxide residues (Met-O), using respiratory chain electrons. Thus protects these proteins from oxidative-stress damage caused by reactive species of oxygen and chlorine generated by the host defense mechanisms. MsrPQ is essential for the maintenance of envelope integrity under bleach stress, rescuing a wide series of structurally unrelated periplasmic proteins from methionine oxidation, including the primary periplasmic chaperone SurA and the lipoprotein Pal. The catalytic subunit MsrP is non-stereospecific, being able to reduce both (R-) and (S-) diastereoisomers of methionine sulfoxide. This is Protein-methionine-sulfoxide reductase catalytic subunit MsrP from Salmonella agona (strain SL483).